We begin with the raw amino-acid sequence, 332 residues long: Fructose-1,6-bisphosphatase class 1 (332 aa).

4 residues coordinate Mg(2+): Glu-89, Asp-110, Leu-112, and Asp-113. Residues 113 to 116, Asn-206, Tyr-239, 257 to 259, and Lys-269 contribute to the substrate site; these read DGSS and YLY. A Mg(2+)-binding site is contributed by Glu-275.

It belongs to the FBPase class 1 family. As to quaternary structure, homotetramer. It depends on Mg(2+) as a cofactor.

Its subcellular location is the cytoplasm. The catalysed reaction is beta-D-fructose 1,6-bisphosphate + H2O = beta-D-fructose 6-phosphate + phosphate. It participates in carbohydrate biosynthesis; gluconeogenesis. The sequence is that of Fructose-1,6-bisphosphatase class 1 from Enterobacter sp. (strain 638).